The chain runs to 81 residues: uncharacterized protein (81 aa).

This is an uncharacterized protein from Dictyostelium discoideum (Social amoeba).